The chain runs to 509 residues: Mitogen-activated protein kinase sma-5 (509 aa).

The segment at 19 to 72 (DPITSMSPPQENRSPKAEYLNNFFNTNPTNGKSRGSQEAPRKPLGQTNLNVQGS) is disordered. Composition is skewed to polar residues over residues 20–30 (PITSMSPPQEN) and 40–54 (NFFN…SRGS). The region spanning 105–411 (YEPTQNIGSG…IQDALLHPYI (307 aa)) is the Protein kinase domain. Residues 111–119 (IGSGAFGIV) and Lys134 each bind ATP. The Proton acceptor role is filled by Asp231. Positions 460-482 (YSELHSGDSTGSTSDMSTNTSGE) are disordered. A compositionally biased stretch (low complexity) spans 466–481 (GDSTGSTSDMSTNTSG).

Belongs to the protein kinase superfamily. CMGC Ser/Thr protein kinase family. MAP kinase subfamily. Mg(2+) is required as a cofactor. In terms of tissue distribution, expressed in intestine with a stronger expression in the four most anterior cells, muscles, excretory cell, pharynx and, to a lesser extent, in hypodermis.

The enzyme catalyses L-seryl-[protein] + ATP = O-phospho-L-seryl-[protein] + ADP + H(+). The catalysed reaction is L-threonyl-[protein] + ATP = O-phospho-L-threonyl-[protein] + ADP + H(+). Its function is as follows. Serine/threonine-protein kinase involved in the postembryonic regulation of body size, mainly through control of cell growth. In particular, controls the volume of intestine, muscles and hypodermis. In addition, regulates growth, intestinal granule distribution, lifespan and number of offspring. This Caenorhabditis elegans protein is Mitogen-activated protein kinase sma-5.